A 549-amino-acid chain; its full sequence is Glucose-6-phosphate isomerase (549 aa).

E355 acts as the Proton donor in catalysis. Active-site residues include H387 and K515.

It belongs to the GPI family.

The protein resides in the cytoplasm. The enzyme catalyses alpha-D-glucose 6-phosphate = beta-D-fructose 6-phosphate. The protein operates within carbohydrate biosynthesis; gluconeogenesis. Its pathway is carbohydrate degradation; glycolysis; D-glyceraldehyde 3-phosphate and glycerone phosphate from D-glucose: step 2/4. In terms of biological role, catalyzes the reversible isomerization of glucose-6-phosphate to fructose-6-phosphate. This is Glucose-6-phosphate isomerase from Histophilus somni (strain 129Pt) (Haemophilus somnus).